The sequence spans 367 residues: Glutamate 5-kinase (367 aa).

An ATP-binding site is contributed by K10. S50, D137, and N149 together coordinate substrate. ATP contacts are provided by residues 169 to 170 (TD) and 211 to 217 (TGGMGTK). The PUA domain occupies 275–353 (AGEITVDDGA…QEISEILGYE (79 aa)).

This sequence belongs to the glutamate 5-kinase family.

It localises to the cytoplasm. The catalysed reaction is L-glutamate + ATP = L-glutamyl 5-phosphate + ADP. Its pathway is amino-acid biosynthesis; L-proline biosynthesis; L-glutamate 5-semialdehyde from L-glutamate: step 1/2. Functionally, catalyzes the transfer of a phosphate group to glutamate to form L-glutamate 5-phosphate. The protein is Glutamate 5-kinase of Serratia proteamaculans (strain 568).